Reading from the N-terminus, the 175-residue chain is MSQALTLARPYARAAFATARDEGAFAPWSDALAFSAHVAVDPRVAALLANPELGRDDAVALLAPVSHGETYSRFLAILAESHRLPLLPEISGMFDALRAEAEHVVKATVTSAAELSAGELDAIKVALRKRFNREVDVTTAVDASLIGGAVIDAGDVVIDGSLKGKLARLQTALAN.

The protein belongs to the ATPase delta chain family. In terms of assembly, F-type ATPases have 2 components, F(1) - the catalytic core - and F(0) - the membrane proton channel. F(1) has five subunits: alpha(3), beta(3), gamma(1), delta(1), epsilon(1). F(0) has three main subunits: a(1), b(2) and c(10-14). The alpha and beta chains form an alternating ring which encloses part of the gamma chain. F(1) is attached to F(0) by a central stalk formed by the gamma and epsilon chains, while a peripheral stalk is formed by the delta and b chains.

The protein resides in the cell membrane. In terms of biological role, f(1)F(0) ATP synthase produces ATP from ADP in the presence of a proton or sodium gradient. F-type ATPases consist of two structural domains, F(1) containing the extramembraneous catalytic core and F(0) containing the membrane proton channel, linked together by a central stalk and a peripheral stalk. During catalysis, ATP synthesis in the catalytic domain of F(1) is coupled via a rotary mechanism of the central stalk subunits to proton translocation. Its function is as follows. This protein is part of the stalk that links CF(0) to CF(1). It either transmits conformational changes from CF(0) to CF(1) or is implicated in proton conduction. This chain is ATP synthase subunit delta, found in Stenotrophomonas maltophilia (strain K279a).